The primary structure comprises 337 residues: Terpene cyclase (337 aa).

The helical transmembrane segment at 5–25 (ASVIFLSLSVLAAVGVWGPFV) threads the bilayer. Asn65 is a glycosylation site (N-linked (GlcNAc...) asparagine). Helical transmembrane passes span 72–92 (IAYC…VILC), 111–131 (GLLS…MSFI), 149–169 (ALIL…LNVL), 177–197 (IWGI…ARII), 222–242 (VAGG…LGIF), 267–287 (LQVD…HELI), and 298–318 (LGGL…AAAW).

Belongs to the membrane-bound ascI terpene cyclase family.

The protein localises to the membrane. Its pathway is antifungal biosynthesis. In terms of biological role, cyclase; part of the gene cluster that mediates the biosynthesis of the tetrahydropyranyl antifungal agent lanomycin that acts as an inhibitor of CYP51 and blocks the ergosterol biosynthesis. The biosynthesis probably begins with the formation of an hexaketide, followed by methionine mediated alkylation of C-2 and C-6, and methylation of the reduced C-3 oxygen, pyran forming reductive ring closure, oxygenation of C-4, beta-keto reduction, enoyl reduction and dehydration of the remaining oxygens, and finally, acylation with glycine to complete the biosynthesis. This chain is Terpene cyclase, found in Pyrenophora dematioidea (Helminthosporium dematioideum).